The sequence spans 174 residues: MSAIPENANVTVLNKNEKKARELIGKLGLKQIPGIIRVTFRKKDNQIYAIEKPEVFRSAGGNYVVFGEAKVDNFTQKLAAAQQQAQASGIMPSNEDVATKSPEDIQADMQAAAEGSVNAAAEEDDEEGEVDAGDLNKDDIELVVQQTNVSKNQAIKALKAHNGDLVNAIMSLSK.

Ser2 carries the N-acetylserine modification. Positions 14–78 (NKNEKKAREL…AKVDNFTQKL (65 aa)) constitute an NAC-A/B domain. The interval 85 to 137 (AQASGIMPSNEDVATKSPEDIQADMQAAAEGSVNAAAEEDDEEGEVDAGDLNK) is disordered. A Phosphoserine modification is found at Ser93. Residues 111-120 (AAAEGSVNAA) are compositionally biased toward low complexity. Over residues 121 to 132 (AEEDDEEGEVDA) the composition is skewed to acidic residues. A UBA domain is found at 135–174 (LNKDDIELVVQQTNVSKNQAIKALKAHNGDLVNAIMSLSK).

It belongs to the NAC-alpha family. Part of the nascent polypeptide-associated complex (NAC), consisting of EGD2 and either EGD1 or BTT1. NAC associates with ribosomes via EGD1 or BTT1, and with the CCR4-NOT complex.

It localises to the cytoplasm. The protein localises to the nucleus. Its function is as follows. Component of the nascent polypeptide-associated complex (NAC), a dynamic component of the ribosomal exit tunnel, protecting the emerging polypeptides from interaction with other cytoplasmic proteins to ensure appropriate nascent protein targeting. The NAC complex also promotes mitochondrial protein import by enhancing productive ribosome interactions with the outer mitochondrial membrane and blocks the inappropriate interaction of ribosomes translating non-secretory nascent polypeptides with translocation sites in the membrane of the endoplasmic reticulum. EGD2 may also be involved in transcription regulation. This Saccharomyces cerevisiae (strain YJM789) (Baker's yeast) protein is Nascent polypeptide-associated complex subunit alpha (EGD2).